The following is a 330-amino-acid chain: ADP-L-glycero-D-manno-heptose-6-epimerase (330 aa).

Residues 11–12, 32–33, Lys39, Lys54, 75–79, and Asn92 contribute to the NADP(+) site; these read FI, DN, and EGACS. The Proton acceptor role is filled by Tyr139. Residue Lys143 participates in NADP(+) binding. Substrate is bound at residue Asn168. NADP(+) is bound by residues Val169 and Lys177. The active-site Proton acceptor is the Lys177. Substrate-binding positions include Arg179, His186, 200-203, Arg213, and Tyr292; that span reads FGEY.

This sequence belongs to the NAD(P)-dependent epimerase/dehydratase family. HldD subfamily. As to quaternary structure, homopentamer. NADP(+) serves as cofactor.

The catalysed reaction is ADP-D-glycero-beta-D-manno-heptose = ADP-L-glycero-beta-D-manno-heptose. The protein operates within nucleotide-sugar biosynthesis; ADP-L-glycero-beta-D-manno-heptose biosynthesis; ADP-L-glycero-beta-D-manno-heptose from D-glycero-beta-D-manno-heptose 7-phosphate: step 4/4. In terms of biological role, catalyzes the interconversion between ADP-D-glycero-beta-D-manno-heptose and ADP-L-glycero-beta-D-manno-heptose via an epimerization at carbon 6 of the heptose. The sequence is that of ADP-L-glycero-D-manno-heptose-6-epimerase from Paraburkholderia phytofirmans (strain DSM 17436 / LMG 22146 / PsJN) (Burkholderia phytofirmans).